Reading from the N-terminus, the 309-residue chain is Pyrroline-5-carboxylate reductase 1, mitochondrial (309 aa).

An N-acetylserine modification is found at serine 2. Residues 6–11 and serine 34 each bind NADP(+); that span reads IGAGQL. Alanine 8, glutamine 10, leucine 11, serine 34, aspartate 36, asparagine 56, valine 70, lysine 71, and alanine 97 together coordinate NADPH. NADP(+) is bound by residues asparagine 56, 69 to 72, and 95 to 97; these read AVKP and CAA. Position 164 (glutamate 164) interacts with L-proline. Asparagine 230 is a binding site for NADPH. Positions 237 and 238 each coordinate L-proline. A phosphoserine mark is found at serine 278 and serine 301.

The protein belongs to the pyrroline-5-carboxylate reductase family. As to quaternary structure, homodecamer; composed of 5 homodimers. Interacts with LTO1. As to expression, highly expressed in osteoblasts and skin.

Its subcellular location is the mitochondrion. The catalysed reaction is L-proline + NADP(+) = (S)-1-pyrroline-5-carboxylate + NADPH + 2 H(+). The enzyme catalyses L-proline + NAD(+) = (S)-1-pyrroline-5-carboxylate + NADH + 2 H(+). It participates in amino-acid biosynthesis; L-proline biosynthesis; L-proline from L-glutamate 5-semialdehyde: step 1/1. In terms of biological role, oxidoreductase that catalyzes the last step in proline biosynthesis, which corresponds to the reduction of pyrroline-5-carboxylate to L-proline using NAD(P)H. At physiologic concentrations, has higher specific activity in the presence of NADH. Involved in the cellular response to oxidative stress. This Mus musculus (Mouse) protein is Pyrroline-5-carboxylate reductase 1, mitochondrial.